A 463-amino-acid chain; its full sequence is Mitochondrial dynamics protein MID51 (463 aa).

The Mitochondrial intermembrane segment spans residues 1-23; it reads MAGAGERKGKKDDNGIGTAIDFV. The helical transmembrane segment at 24 to 46 threads the bilayer; the sequence is LSNARLVLGVGGAAMLGIATLAV. Topologically, residues 47 to 463 are cytoplasmic; sequence KRMYDRAISA…LSEPEVLLQT (417 aa). The tract at residues 49-195 is dimerization; sequence MYDRAISAPT…LSGSLYDDLQ (147 aa). Residues Ser55, Ser59, Ser79, and Ser94 each carry the phosphoserine modification. Residues 57–77 form a disordered region; it reads PTSPTRLSHSGKRSWEEPNWM. The important for interaction with DNM1L stretch occupies residues 160 to 169; it reads AAVDICAELR. Positions 187, 189, and 201 each coordinate ADP. Residues 234 to 243 are important for interaction with DNM1L; it reads RRENPEYFPR. ADP is bound by residues Ser340, Arg342, and Lys368.

Belongs to the MID49/MID51 family. As to quaternary structure, homodimer. Interacts with DNM1L.

Its subcellular location is the mitochondrion outer membrane. Functionally, mitochondrial outer membrane protein which regulates mitochondrial fission/fusion dynamics. Promotes the recruitment and association of the fission mediator dynamin-related protein 1 (DNM1L) to the mitochondrial surface independently of the mitochondrial fission FIS1 and MFF proteins. Regulates DNM1L GTPase activity and DNM1L oligomerization. Binds ADP and can also bind GDP, although with lower affinity. Does not bind CDP, UDP, ATP, AMP or GTP. Inhibits DNM1L GTPase activity in the absence of bound ADP. Requires ADP to stimulate DNM1L GTPase activity and the assembly of DNM1L into long, oligomeric tubules with a spiral pattern, as opposed to the ring-like DNM1L oligomers observed in the absence of bound ADP. Does not require ADP for its function in recruiting DNM1L. In Rattus norvegicus (Rat), this protein is Mitochondrial dynamics protein MID51 (Mief1).